The following is a 145-amino-acid chain: Large ribosomal subunit protein uL24 (145 aa).

Positions 108 to 145 are disordered; that stretch reads EPIQEEQQKTEETKQEIAPEEVEAKEAQDKQEVKENDQ. Residues 113-145 are compositionally biased toward basic and acidic residues; the sequence is EQQKTEETKQEIAPEEVEAKEAQDKQEVKENDQ.

It belongs to the universal ribosomal protein uL24 family. As to quaternary structure, part of the 50S ribosomal subunit.

Its function is as follows. One of two assembly initiator proteins, it binds directly to the 5'-end of the 23S rRNA, where it nucleates assembly of the 50S subunit. Functionally, located at the polypeptide exit tunnel on the outside of the subunit. This is Large ribosomal subunit protein uL24 (rpl24) from Thermoplasma volcanium (strain ATCC 51530 / DSM 4299 / JCM 9571 / NBRC 15438 / GSS1).